Consider the following 316-residue polypeptide: Acetyl-coenzyme A carboxylase carboxyl transferase subunit beta (316 aa).

Residues 39–308 (LWHKCSKCGV…TPPMVLWETM (270 aa)) enclose the CoA carboxyltransferase N-terminal domain. Positions 43, 46, 62, and 65 each coordinate Zn(2+). Residues 43–65 (CSKCGVLTYTKDLRANQMVCVEC) form a C4-type zinc finger.

It belongs to the AccD/PCCB family. As to quaternary structure, acetyl-CoA carboxylase is a heterohexamer composed of biotin carboxyl carrier protein (AccB), biotin carboxylase (AccC) and two subunits each of ACCase subunit alpha (AccA) and ACCase subunit beta (AccD). Zn(2+) is required as a cofactor.

The protein resides in the cytoplasm. The enzyme catalyses N(6)-carboxybiotinyl-L-lysyl-[protein] + acetyl-CoA = N(6)-biotinyl-L-lysyl-[protein] + malonyl-CoA. Its pathway is lipid metabolism; malonyl-CoA biosynthesis; malonyl-CoA from acetyl-CoA: step 1/1. In terms of biological role, component of the acetyl coenzyme A carboxylase (ACC) complex. Biotin carboxylase (BC) catalyzes the carboxylation of biotin on its carrier protein (BCCP) and then the CO(2) group is transferred by the transcarboxylase to acetyl-CoA to form malonyl-CoA. This chain is Acetyl-coenzyme A carboxylase carboxyl transferase subunit beta, found in Nostoc sp. (strain PCC 7120 / SAG 25.82 / UTEX 2576).